Here is a 231-residue protein sequence, read N- to C-terminus: Putative aminodeoxychorismate lyase (231 aa).

It belongs to the class-IV pyridoxal-phosphate-dependent aminotransferase family. Pyridoxal 5'-phosphate is required as a cofactor.

Its subcellular location is the cytoplasm. It localises to the nucleus. The catalysed reaction is 4-amino-4-deoxychorismate = 4-aminobenzoate + pyruvate + H(+). It functions in the pathway cofactor biosynthesis; tetrahydrofolate biosynthesis; 4-aminobenzoate from chorismate: step 2/2. In terms of biological role, converts 4-amino-4-deoxychorismate into 4-aminobenzoate (PABA) and pyruvate. This is Putative aminodeoxychorismate lyase from Schizosaccharomyces pombe (strain 972 / ATCC 24843) (Fission yeast).